The following is a 391-amino-acid chain: Transposase for insertion sequence element IS905 (391 aa).

The protein belongs to the transposase mutator family.

In terms of biological role, required for the transposition of the insertion element. This chain is Transposase for insertion sequence element IS905 (tra905), found in Lactococcus lactis subsp. lactis (strain IL1403) (Streptococcus lactis).